The sequence spans 103 residues: Large ribosomal subunit protein bL21 (103 aa).

This sequence belongs to the bacterial ribosomal protein bL21 family. Part of the 50S ribosomal subunit. Contacts protein L20.

In terms of biological role, this protein binds to 23S rRNA in the presence of protein L20. In Actinobacillus pleuropneumoniae serotype 5b (strain L20), this protein is Large ribosomal subunit protein bL21.